Consider the following 514-residue polypeptide: Probable cytochrome P450 6w1 (514 aa).

Cys-450 contributes to the heme binding site.

Belongs to the cytochrome P450 family. Heme is required as a cofactor.

It is found in the endoplasmic reticulum membrane. Its subcellular location is the microsome membrane. In terms of biological role, may be involved in the metabolism of insect hormones and in the breakdown of synthetic insecticides. The protein is Probable cytochrome P450 6w1 (Cyp6w1) of Drosophila melanogaster (Fruit fly).